A 397-amino-acid chain; its full sequence is Lysophospholipid transporter LplT (397 aa).

The Periplasmic portion of the chain corresponds to 1-17 (MSESVHTNTSLWSKGMK). A helical membrane pass occupies residues 18–38 (AVIVAQFLSAFGDNALLFATL). At 39–52 (ALLKAQFYPEWSQP) the chain is on the cytoplasmic side. The helical transmembrane segment at 53 to 73 (ILQMVFVGAYILFAPFVGQVA) threads the bilayer. At 74–90 (DSFAKGRVMMFANGLKL) the chain is on the periplasmic side. Residues 91-111 (LGAASICFGINPFLGYTLVGV) form a helical membrane-spanning segment. Over 112–144 (GAAAYSPAKYGILGELTTGSKLVKANGLMEAST) the chain is Cytoplasmic. A helical transmembrane segment spans residues 145–165 (IAAILLGSVAGGVLADWHVLV). Position 166 (A166) is a topological domain, periplasmic. Residues 167-187 (LAACALAYGGAVVANIYIPKL) traverse the membrane as a helical segment. Residues 188 to 226 (AAARPGQSWNLINMTRSFLNACTSLWRNGETRFSLVGTS) are Cytoplasmic-facing. A helical membrane pass occupies residues 227-247 (LFWGAGVTLRFLLVLWVPVAL). Over 248–256 (GITDNATPT) the chain is Periplasmic. The helical transmembrane segment at 257 to 277 (YLNAMVAIGIVVGAGAAAKLV) threads the bilayer. Topologically, residues 278 to 280 (TLE) are cytoplasmic. A helical transmembrane segment spans residues 281 to 301 (TVSRCMPAGILIGVVVLIFSL). The Periplasmic segment spans residues 302 to 304 (QHE). Residues 305 to 325 (LLPAYALLMLIGVLGGFFVVP) form a helical membrane-spanning segment. Residues 326 to 343 (LNALLQERGKKSVGAGNA) are Cytoplasmic-facing. The helical transmembrane segment at 344–364 (IAVQNLGENSAMLLMLGIYSL) threads the bilayer. Residues 365–366 (AV) are Periplasmic-facing. Residues 367 to 387 (MVGIPVVPIGIGFGALFALAI) traverse the membrane as a helical segment. The Cytoplasmic portion of the chain corresponds to 388-397 (TALWIWQRRH).

It belongs to the major facilitator superfamily. LplT (TC 2.A.1.42) family.

Its subcellular location is the cell inner membrane. Its function is as follows. Catalyzes the facilitated diffusion of 2-acyl-glycero-3-phosphoethanolamine (2-acyl-GPE) into the cell. This Escherichia coli (strain SMS-3-5 / SECEC) protein is Lysophospholipid transporter LplT.